The sequence spans 227 residues: Enolase-phosphatase E1 (227 aa).

It belongs to the HAD-like hydrolase superfamily. MasA/MtnC family. Monomer. It depends on Mg(2+) as a cofactor.

It catalyses the reaction 5-methylsulfanyl-2,3-dioxopentyl phosphate + H2O = 1,2-dihydroxy-5-(methylsulfanyl)pent-1-en-3-one + phosphate. Its pathway is amino-acid biosynthesis; L-methionine biosynthesis via salvage pathway; L-methionine from S-methyl-5-thio-alpha-D-ribose 1-phosphate: step 3/6. It participates in amino-acid biosynthesis; L-methionine biosynthesis via salvage pathway; L-methionine from S-methyl-5-thio-alpha-D-ribose 1-phosphate: step 4/6. Functionally, bifunctional enzyme that catalyzes the enolization of 2,3-diketo-5-methylthiopentyl-1-phosphate (DK-MTP-1-P) into the intermediate 2-hydroxy-3-keto-5-methylthiopentenyl-1-phosphate (HK-MTPenyl-1-P), which is then dephosphorylated to form the acireductone 1,2-dihydroxy-3-keto-5-methylthiopentene (DHK-MTPene). The protein is Enolase-phosphatase E1 of Pseudomonas savastanoi pv. phaseolicola (strain 1448A / Race 6) (Pseudomonas syringae pv. phaseolicola (strain 1448A / Race 6)).